The primary structure comprises 114 residues: Protein lin-52 homolog (114 aa).

2 positions are modified to phosphoserine: Ser26 and Ser51.

The protein belongs to the lin-52 family. In terms of assembly, component of the DREAM complex (also named LINC complex) at least composed of E2F4, E2F5, LIN9, LIN37, LIN52, LIN54, MYBL1, MYBL2, RBL1, RBL2, RBBP4, TFDP1 and TFDP2. The complex exists in quiescent cells where it represses cell cycle-dependent genes. It dissociates in S phase when LIN9, LIN37, LIN52 and LIN54 form a subcomplex that binds to MYBL2.

The chain is Protein lin-52 homolog (LIN52) from Pongo abelii (Sumatran orangutan).